The sequence spans 157 residues: 2-C-methyl-D-erythritol 2,4-cyclodiphosphate synthase (157 aa).

The a divalent metal cation site is built by D8 and H10. Residues 8 to 10 (DVH) and 34 to 35 (HS) each bind 4-CDP-2-C-methyl-D-erythritol 2-phosphate. A divalent metal cation is bound at residue H42. Residues 56-58 (DIG), 61-65 (FPDTD), 100-106 (AQRPKMA), 132-135 (TTEE), and F139 contribute to the 4-CDP-2-C-methyl-D-erythritol 2-phosphate site.

It belongs to the IspF family. In terms of assembly, homotrimer. Requires a divalent metal cation as cofactor.

The enzyme catalyses 4-CDP-2-C-methyl-D-erythritol 2-phosphate = 2-C-methyl-D-erythritol 2,4-cyclic diphosphate + CMP. The protein operates within isoprenoid biosynthesis; isopentenyl diphosphate biosynthesis via DXP pathway; isopentenyl diphosphate from 1-deoxy-D-xylulose 5-phosphate: step 4/6. Functionally, involved in the biosynthesis of isopentenyl diphosphate (IPP) and dimethylallyl diphosphate (DMAPP), two major building blocks of isoprenoid compounds. Catalyzes the conversion of 4-diphosphocytidyl-2-C-methyl-D-erythritol 2-phosphate (CDP-ME2P) to 2-C-methyl-D-erythritol 2,4-cyclodiphosphate (ME-CPP) with a corresponding release of cytidine 5-monophosphate (CMP). The polypeptide is 2-C-methyl-D-erythritol 2,4-cyclodiphosphate synthase (Trichlorobacter lovleyi (strain ATCC BAA-1151 / DSM 17278 / SZ) (Geobacter lovleyi)).